The chain runs to 325 residues: Phosphatidylglycerol--prolipoprotein diacylglyceryl transferase (325 aa).

4 helical membrane-spanning segments follow: residues Ile-19–Gly-39, Gly-47–Gly-67, Ile-93–Ile-113, and Gly-119–Ile-139. Arg-141 provides a ligand contact to a 1,2-diacyl-sn-glycero-3-phospho-(1'-sn-glycerol). The next 3 helical transmembrane spans lie at His-175–Ala-195, Phe-207–Arg-225, and Leu-237–Ala-257. The segment covering Ile-266–Thr-312 has biased composition (basic and acidic residues). Residues Ile-266–Ala-325 are disordered. Low complexity predominate over residues Ala-313–Ala-325.

Belongs to the Lgt family.

The protein resides in the cell membrane. It catalyses the reaction L-cysteinyl-[prolipoprotein] + a 1,2-diacyl-sn-glycero-3-phospho-(1'-sn-glycerol) = an S-1,2-diacyl-sn-glyceryl-L-cysteinyl-[prolipoprotein] + sn-glycerol 1-phosphate + H(+). It functions in the pathway protein modification; lipoprotein biosynthesis (diacylglyceryl transfer). Catalyzes the transfer of the diacylglyceryl group from phosphatidylglycerol to the sulfhydryl group of the N-terminal cysteine of a prolipoprotein, the first step in the formation of mature lipoproteins. This chain is Phosphatidylglycerol--prolipoprotein diacylglyceryl transferase, found in Streptomyces griseus subsp. griseus (strain JCM 4626 / CBS 651.72 / NBRC 13350 / KCC S-0626 / ISP 5235).